We begin with the raw amino-acid sequence, 220 residues long: Exodeoxyribonuclease 10 (220 aa).

Mg(2+) is required as a cofactor.

Functionally, capable of degrading both single-strand and double-strand DNA with 3' to 5' polarity. Has higher affinity for ssDNA ends than for dsDNA. The chain is Exodeoxyribonuclease 10 (exoX) from Escherichia coli O6:H1 (strain CFT073 / ATCC 700928 / UPEC).